The primary structure comprises 398 residues: Riboflavin biosynthesis protein RibBA (398 aa).

The DHBP synthase stretch occupies residues 1–199; it reads MFHPIEEALD…IKDLIQYRYN (199 aa). Residues 26-27, Asp31, 138-142, and Glu162 contribute to the D-ribulose 5-phosphate site; these read RE and RAGHT. Residue Glu27 coordinates Mg(2+). His141 contributes to the Mg(2+) binding site. Residues 200–398 are GTP cyclohydrolase II; it reads LTTLVEREVD…MNKLGHLLHF (199 aa). 251–255 lines the GTP pocket; that stretch reads RVHSE. Cys256, Cys267, and Cys269 together coordinate Zn(2+). GTP-binding positions include Gln272, 294–296, and Thr316; that span reads EGR. The active-site Proton acceptor; for GTP cyclohydrolase activity is Asp328. The active-site Nucleophile; for GTP cyclohydrolase activity is the Arg330. GTP contacts are provided by Thr351 and Lys356.

The protein in the N-terminal section; belongs to the DHBP synthase family. It in the C-terminal section; belongs to the GTP cyclohydrolase II family. It depends on Mg(2+) as a cofactor. Mn(2+) serves as cofactor. Zn(2+) is required as a cofactor.

It catalyses the reaction D-ribulose 5-phosphate = (2S)-2-hydroxy-3-oxobutyl phosphate + formate + H(+). The catalysed reaction is GTP + 4 H2O = 2,5-diamino-6-hydroxy-4-(5-phosphoribosylamino)-pyrimidine + formate + 2 phosphate + 3 H(+). Its pathway is cofactor biosynthesis; riboflavin biosynthesis; 2-hydroxy-3-oxobutyl phosphate from D-ribulose 5-phosphate: step 1/1. It functions in the pathway cofactor biosynthesis; riboflavin biosynthesis; 5-amino-6-(D-ribitylamino)uracil from GTP: step 1/4. In terms of biological role, catalyzes the conversion of D-ribulose 5-phosphate to formate and 3,4-dihydroxy-2-butanone 4-phosphate. Catalyzes the conversion of GTP to 2,5-diamino-6-ribosylamino-4(3H)-pyrimidinone 5'-phosphate (DARP), formate and pyrophosphate. This chain is Riboflavin biosynthesis protein RibBA, found in Bacillus subtilis (strain 168).